Consider the following 307-residue polypeptide: MTSAQNESQALGDLAARQLANATKTVPQLSTITPRWLLHLLNWVPVEAGIYRVNRVVNPEQVAIKAEAGAGSEEPLPQTYVDYETSPREYTLRSISTLVDIHTRVSDLYSSPHDQIAQQLRLTIETIKERQELELINSPEYGLLAQATPEQTIQTLAGAPTPDDLDALITKVWKTPSFFLTHPLGIAAFGREATYRGVPPPVVSLFGAQFITWRGIPLIPSDKVPVEDGKTKFILVRTGEERQGVVGLFQPGLVGEQAPGLSVRFTGINQSAIATYLVTLYTSLAVLTDDALAVLDDVAVDQFHEYK.

Belongs to the encapsulin family. Family 2A subfamily. The encapsulin nanocompartment is formed by 60 subunits; monomers form pentamers which assemble to form shells. There are 12 charged pores where the pentamers meet as well as 3-fold axis channels and dimer channels. Isolated from bacteria in a complex with cysteine desulfurase (AC Q9KII6).

It is found in the encapsulin nanocompartment. The protein resides in the cell membrane. Its function is as follows. Shell component of a type 2A encapsulin nanocompartment. Forms encapsulin nanocompartments about 24 nm in diameter from 60 monomers, probably involved in sulfur metabolism. Probably encapsulates cysteine desulfurase. The sequence is that of Type 2A encapsulin shell protein from Mycolicibacterium paratuberculosis (strain ATCC BAA-968 / K-10) (Mycobacterium paratuberculosis).